The following is a 328-amino-acid chain: Protein FAM76B (328 aa).

Residues 143 to 232 (KEQRKGLGSS…ITQSMDSGGT (90 aa)) form a disordered region. Residues 148–159 (GLGSSHSNSSSL) are compositionally biased toward low complexity. A compositionally biased stretch (basic residues) spans 165–183 (QRHHHHHQHHRHGSSHHKI). Polar residues predominate over residues 185–201 (GNLSPEQDQGLWKQSIQ). Serine 188 bears the Phosphoserine mark. Positions 203 to 213 (ETPKKKPKLET) are enriched in basic and acidic residues. Positions 216–232 (SNGDSSSITQSMDSGGT) are enriched in polar residues. Residues 237–316 (LISQLKEEVM…KQVAALSKGK (80 aa)) are a coiled coil.

The protein belongs to the FAM76 family. Highly expressed in hematopoietic and immune systems including in the thymus, spleen, kidney, and blood vessel.

Functionally, plays a role in hematopoiesis and immune system development, and participates in the inflammatory response. The polypeptide is Protein FAM76B (fam76b) (Danio rerio (Zebrafish)).